Reading from the N-terminus, the 627-residue chain is MSVISIMPLASKPCLNKSFISSTHEPKALRRPISTVGLCRRAKSVTASMSMSSSTAVSDDGVQRRIGNHHSNLWDDNFIQSLSSPYGPSSYGERAERLIGEVKEIFNRISMANGELVSHVDDLLQHLSMVDNVERLGIDRHFQTEIKVSLDYVYSYWSEKGIGPGRDIVCADLNTTALGFRVLRLHGYTVFPDVFEQFKDQMGRIACSANQTERQISSILNLFRASLIAFPWEKVMEEAEIFSTAYLKEALQTIPVSSLSREIQYVLDYRWHSDLPRLETRTYIDILRENATNETLDMKTEKLLELAKVEFNIFNSLQQNELKCVSRWWKESGSPDLTFIRHRQVEFYTLVSGIDMEPKRSTFRINFVKICHFVTILDDMYDTFGTIDELRLFTAAVTRWDKSATECLPEYMKGVYIDLYETVNELAREAHKSQGRDTLNYAREALEDYLGSYLKEAEWISTGYIPTFEEYLENGKVSSAHRIATLQPILMLDVPFPPHVLQEIDFPSKFNDLAGSILRLRGDTRCYQNDRARGEEASCISCYMKDNPGSTEEDALNHINGMIEKQIKELNWELLKPDKNVPISSKKHAFNISRGLHHFYKYRDGYTVANSETRNLVIKTVLEPVPM.

The transit peptide at 1–36 directs the protein to the chloroplast; that stretch reads MSVISIMPLASKPCLNKSFISSTHEPKALRRPISTV. 3 residues coordinate Mg(2+): Asp-378, Asp-382, and Asp-530. Positions 378–382 match the DDXXD motif motif; that stretch reads DDMYD.

Belongs to the terpene synthase family. Tpsd subfamily. Mg(2+) serves as cofactor. Mn(2+) is required as a cofactor.

Its subcellular location is the plastid. The protein resides in the chloroplast. It carries out the reaction (2E)-geranyl diphosphate = (+)-car-3-ene + diphosphate. Its pathway is terpene metabolism; oleoresin biosynthesis. Terpene synthase (TPS) involved in defensive oleoresin formation in conifers in response to insect attack or other injury. In Picea glauca (White spruce), this protein is Carene synthase, chloroplastic (3CAR).